The sequence spans 292 residues: Probable ABC transporter permease protein PH1215 (292 aa).

The next 6 membrane-spanning stretches (helical) occupy residues 10 to 30 (IILF…FAVV), 72 to 92 (LLLI…LAIL), 106 to 126 (IYVL…AWMY), 160 to 180 (IIIA…LAGI), 215 to 235 (LSAF…IWVL), and 261 to 281 (FAYG…VVLP). The ABC transmembrane type-1 domain maps to 68–284 (LRNNLLLILL…ALVVVLPYLY (217 aa)).

Belongs to the binding-protein-dependent transport system permease family. MalFG subfamily.

It is found in the cell membrane. Probably part of a binding-protein-dependent transport system PH1214/15/16. Probably responsible for the translocation of the substrate across the membrane. The polypeptide is Probable ABC transporter permease protein PH1215 (Pyrococcus horikoshii (strain ATCC 700860 / DSM 12428 / JCM 9974 / NBRC 100139 / OT-3)).